A 200-amino-acid chain; its full sequence is Charged multivesicular body protein 6 (200 aa).

The N-myristoyl glycine moiety is linked to residue glycine 2. A coiled-coil region spans residues 10–145 (QSRVTEQDRA…YQRQIDELLA (136 aa)). Serine 119 carries the phosphoserine modification. Position 130 is a phosphothreonine (threonine 130). The short motif at 168 to 179 (MELPEVPSEPLP) is the Type-2 MIT-interacting motif element. Residues 168–200 (MELPEVPSEPLPDRNPEAPAKARSRQAELVAAS) form a disordered region.

It belongs to the SNF7 family. As to quaternary structure, probable core component of the endosomal sorting required for transport complex III (ESCRT-III). ESCRT-III components are thought to multimerize to form a flat lattice on the perimeter membrane of the endosome. Several assembly forms of ESCRT-III may exist that interact and act sequentially. Interacts with VPS4A; the interaction is direct. Interacts with VPS4B; the interaction is direct. Interacts with CHMP4A, CHMP4B and CHMP4C. Interacts with SNF8, VPS25 and VPS36. In terms of processing, ISGylated in a CHMP5-dependent manner. Isgylation weakens its interaction with VPS4A.

It localises to the endomembrane system. The protein localises to the endosome membrane. The protein resides in the late endosome membrane. Its subcellular location is the membrane. Probable core component of the endosomal sorting required for transport complex III (ESCRT-III) which is involved in multivesicular bodies (MVBs) formation and sorting of endosomal cargo proteins into MVBs. MVBs contain intraluminal vesicles (ILVs) that are generated by invagination and scission from the limiting membrane of the endosome and mostly are delivered to lysosomes enabling degradation of membrane proteins, such as stimulated growth factor receptors, lysosomal enzymes and lipids. The MVB pathway appears to require the sequential function of ESCRT-O, -I,-II and -III complexes. ESCRT-III proteins mostly dissociate from the invaginating membrane before the ILV is released. The ESCRT machinery also functions in topologically equivalent membrane fission events, such as the terminal stages of cytokinesis. ESCRT-III proteins are believed to mediate the necessary vesicle extrusion and/or membrane fission activities, possibly in conjunction with the AAA ATPase VPS4. In the ESCRT-III complex, it probably serves as an acceptor for the ESCRT-II complex on endosomal membranes. This Mus musculus (Mouse) protein is Charged multivesicular body protein 6 (Chmp6).